The following is a 428-amino-acid chain: Flotillin-2 (428 aa).

G2 carries N-myristoyl glycine lipidation. A lipid anchor (S-palmitoyl cysteine; by ZDHHC5) is attached at C4. C19 carries S-palmitoyl cysteine lipidation. A lipid anchor (S-palmitoyl cysteine; by ZDHHC5) is attached at C20. At S405 the chain carries Phosphoserine.

The protein belongs to the band 7/mec-2 family. Flotillin subfamily. Heterooligomeric complex of flotillin-1 and flotillin-2 and caveolin-1 and caveolin-2. Interacts with ECPAS. ZDHHC5-catalyzed palmitoylation predominantly occurs at Cys-4. ZDHHC5-catalyzed palmitoylation may be required for the formation of higher-order complexes and for neurite outgrowth in cultured neural stem cells. In skin, expressed in epidermis and epidermal appendages but not in dermis. Expressed in all layers of the epidermis except the basal layer. In hair follicles, expressed in the suprabasal layer but not the basal layer. Also expressed in melanoma and carcinoma cell lines, fibroblasts and foreskin melanocytes.

The protein resides in the cell membrane. The protein localises to the membrane. Its subcellular location is the caveola. It is found in the endosome. In terms of biological role, may act as a scaffolding protein within caveolar membranes, functionally participating in formation of caveolae or caveolae-like vesicles. May be involved in epidermal cell adhesion and epidermal structure and function. The sequence is that of Flotillin-2 (FLOT2) from Homo sapiens (Human).